Consider the following 381-residue polypeptide: Probable peptidoglycan glycosyltransferase FtsW (381 aa).

Transmembrane regions (helical) follow at residues 16–36 (LVLL…VYSA), 56–76 (LIFA…DYQL), 80–100 (WAVP…IPGI), 145–165 (LLSA…GLLL), 168–188 (PDMG…FAAG), 191–211 (LIFI…LVVH), 274–294 (VIGE…FFIL), 312–332 (FLAL…MAVV), and 343–363 (LPFL…VGIL).

It belongs to the SEDS family. FtsW subfamily.

It localises to the cell inner membrane. The enzyme catalyses [GlcNAc-(1-&gt;4)-Mur2Ac(oyl-L-Ala-gamma-D-Glu-L-Lys-D-Ala-D-Ala)](n)-di-trans,octa-cis-undecaprenyl diphosphate + beta-D-GlcNAc-(1-&gt;4)-Mur2Ac(oyl-L-Ala-gamma-D-Glu-L-Lys-D-Ala-D-Ala)-di-trans,octa-cis-undecaprenyl diphosphate = [GlcNAc-(1-&gt;4)-Mur2Ac(oyl-L-Ala-gamma-D-Glu-L-Lys-D-Ala-D-Ala)](n+1)-di-trans,octa-cis-undecaprenyl diphosphate + di-trans,octa-cis-undecaprenyl diphosphate + H(+). The protein operates within cell wall biogenesis; peptidoglycan biosynthesis. Peptidoglycan polymerase that is essential for cell division. In Trichlorobacter lovleyi (strain ATCC BAA-1151 / DSM 17278 / SZ) (Geobacter lovleyi), this protein is Probable peptidoglycan glycosyltransferase FtsW.